A 67-amino-acid chain; its full sequence is Systemic RNA interference defective protein 5 (67 aa).

Over 1–18 (MPSKNCAKNLHACQWERD) the chain is Extracellular. A helical membrane pass occupies residues 19 to 39 (IALVFLGLMVLFNIGQVVYMN). Residues 40–67 (RARLYRLIRRGAEQIPADDEEPIIGIRD) are Cytoplasmic-facing.

As to expression, ubiquitously present in most tissues tested. Expressed in the somatic cells of intestine, muscle, neurons, somatic gonad and embryos but not in the germline (at protein level).

It localises to the late endosome membrane. Functionally, plays a role in RNA-mediated gene silencing by mediating transport of both ingested and endogenous dsRNA between cells. Not required for the uptake of dsRNA from the intestinal lumen. The sequence is that of Systemic RNA interference defective protein 5 from Caenorhabditis elegans.